The following is a 106-amino-acid chain: Violacin-A (106 aa).

Positions 1 to 29 (MDAQKMKMVIGLVLVATTAFALMIPAASA) are cleaved as a signal peptide. A propeptide spanning residues 30 to 79 (VDDFITRRAYDNLVKSGAIKDIPVMAKTIISNPVLEEGMLTYYTNKKLGD) is cleaved from the precursor. Intrachain disulfides connect Cys-84/Cys-98, Cys-88/Cys-100, and Cys-93/Cys-105.

It belongs to the cyclotide family. Moebius subfamily. Post-translationally, violacin-A is not a cyclic peptide.

Its function is as follows. Probably participates in a plant defense mechanism. Has low hemolytic activity. The chain is Violacin-A from Viola odorata (Sweet violet).